A 155-amino-acid chain; its full sequence is Cyanate hydratase (155 aa).

Active-site residues include R92, E95, and S118.

It belongs to the cyanase family.

The catalysed reaction is cyanate + hydrogencarbonate + 3 H(+) = NH4(+) + 2 CO2. Catalyzes the reaction of cyanate with bicarbonate to produce ammonia and carbon dioxide. This Mycobacterium avium (strain 104) protein is Cyanate hydratase.